A 145-amino-acid polypeptide reads, in one-letter code: 3-dehydroquinate dehydratase (145 aa).

Tyr23 acts as the Proton acceptor in catalysis. Substrate contacts are provided by Asn73, His79, and Asp86. Catalysis depends on His99, which acts as the Proton donor. Substrate is bound by residues Leu100–Ser101 and Arg110.

Belongs to the type-II 3-dehydroquinase family. Homododecamer.

It catalyses the reaction 3-dehydroquinate = 3-dehydroshikimate + H2O. It participates in metabolic intermediate biosynthesis; chorismate biosynthesis; chorismate from D-erythrose 4-phosphate and phosphoenolpyruvate: step 3/7. In terms of biological role, catalyzes a trans-dehydration via an enolate intermediate. The protein is 3-dehydroquinate dehydratase of Desulfitobacterium hafniense (strain Y51).